The sequence spans 610 residues: Pentatricopeptide repeat-containing protein At5g40400 (610 aa).

PPR repeat units lie at residues 165 to 199 (DPVV…GFSV), 200 to 234 (SVVT…GIHP), 235 to 269 (NTYT…GFEP), 270 to 304 (DLVT…RVVP), 305 to 339 (DLVT…GIKP), 340 to 374 (DCMS…SVVP), 375 to 409 (DRFT…KVDI), 410 to 445 (PFEV…GHEA), 446 to 480 (KPET…NQVL), 481 to 515 (DAKT…EVKP), 516 to 546 (DSFI…FAME), and 551 to 586 (DPES…GFVP).

The protein belongs to the PPR family. P subfamily.

The protein is Pentatricopeptide repeat-containing protein At5g40400 of Arabidopsis thaliana (Mouse-ear cress).